The sequence spans 477 residues: Protoporphyrinogen oxidase (477 aa).

Residues 9–14 (GGGISG), W42, 57–60 (GPRG), V257, A449, and 454–456 (VAV) contribute to the FAD site.

It belongs to the protoporphyrinogen/coproporphyrinogen oxidase family. Protoporphyrinogen oxidase subfamily. Monomer. Homodimer. FAD is required as a cofactor.

The protein localises to the mitochondrion inner membrane. The catalysed reaction is protoporphyrinogen IX + 3 O2 = protoporphyrin IX + 3 H2O2. It participates in porphyrin-containing compound metabolism; protoporphyrin-IX biosynthesis; protoporphyrin-IX from protoporphyrinogen-IX: step 1/1. Inhibited by acifluorfen. Its function is as follows. Catalyzes the 6-electron oxidation of protoporphyrinogen-IX to form protoporphyrin-IX. In Mus musculus (Mouse), this protein is Protoporphyrinogen oxidase (Ppox).